The chain runs to 460 residues: Bifunctional protein GlmU (460 aa).

Positions M1–R235 are pyrophosphorylase. UDP-N-acetyl-alpha-D-glucosamine contacts are provided by residues L9–G12, K23, Q76, and G81–T82. Position 109 (D109) interacts with Mg(2+). Residues G146, E161, N176, and N233 each contribute to the UDP-N-acetyl-alpha-D-glucosamine site. Residue N233 participates in Mg(2+) binding. The tract at residues V236–D256 is linker. The interval G257 to R460 is N-acetyltransferase. UDP-N-acetyl-alpha-D-glucosamine is bound by residues R338 and K356. Catalysis depends on H368, which acts as the Proton acceptor. 2 residues coordinate UDP-N-acetyl-alpha-D-glucosamine: Y371 and N382. Acetyl-CoA is bound by residues N391 to Y392 and A428.

It in the N-terminal section; belongs to the N-acetylglucosamine-1-phosphate uridyltransferase family. The protein in the C-terminal section; belongs to the transferase hexapeptide repeat family. In terms of assembly, homotrimer. Mg(2+) is required as a cofactor.

It is found in the cytoplasm. It carries out the reaction alpha-D-glucosamine 1-phosphate + acetyl-CoA = N-acetyl-alpha-D-glucosamine 1-phosphate + CoA + H(+). The enzyme catalyses N-acetyl-alpha-D-glucosamine 1-phosphate + UTP + H(+) = UDP-N-acetyl-alpha-D-glucosamine + diphosphate. The protein operates within nucleotide-sugar biosynthesis; UDP-N-acetyl-alpha-D-glucosamine biosynthesis; N-acetyl-alpha-D-glucosamine 1-phosphate from alpha-D-glucosamine 6-phosphate (route II): step 2/2. It functions in the pathway nucleotide-sugar biosynthesis; UDP-N-acetyl-alpha-D-glucosamine biosynthesis; UDP-N-acetyl-alpha-D-glucosamine from N-acetyl-alpha-D-glucosamine 1-phosphate: step 1/1. Its pathway is bacterial outer membrane biogenesis; LPS lipid A biosynthesis. Functionally, catalyzes the last two sequential reactions in the de novo biosynthetic pathway for UDP-N-acetylglucosamine (UDP-GlcNAc). The C-terminal domain catalyzes the transfer of acetyl group from acetyl coenzyme A to glucosamine-1-phosphate (GlcN-1-P) to produce N-acetylglucosamine-1-phosphate (GlcNAc-1-P), which is converted into UDP-GlcNAc by the transfer of uridine 5-monophosphate (from uridine 5-triphosphate), a reaction catalyzed by the N-terminal domain. The sequence is that of Bifunctional protein GlmU from Bifidobacterium longum (strain DJO10A).